The sequence spans 271 residues: Elongation factor Ts (271 aa).

The involved in Mg(2+) ion dislocation from EF-Tu stretch occupies residues 76-79 (TDFV).

The protein belongs to the EF-Ts family.

The protein resides in the cytoplasm. Functionally, associates with the EF-Tu.GDP complex and induces the exchange of GDP to GTP. It remains bound to the aminoacyl-tRNA.EF-Tu.GTP complex up to the GTP hydrolysis stage on the ribosome. The protein is Elongation factor Ts of Mycolicibacterium vanbaalenii (strain DSM 7251 / JCM 13017 / BCRC 16820 / KCTC 9966 / NRRL B-24157 / PYR-1) (Mycobacterium vanbaalenii).